Reading from the N-terminus, the 309-residue chain is NADH-cytochrome b5 reductase 1 (309 aa).

A helical transmembrane segment spans residues glutamate 29–glycine 49. The FAD-binding FR-type domain occupies threonine 60–threonine 165. Residues threonine 145–glycine 160 and histidine 171–leucine 208 contribute to the FAD site.

Belongs to the flavoprotein pyridine nucleotide cytochrome reductase family. As to quaternary structure, monomer. Component of the 2-(3-amino-3-carboxypropyl)histidine synthase complex composed of dph1, dph2, dph3 and a NADH-dependent reductase, predominantly cbr1. It depends on FAD as a cofactor.

The protein resides in the mitochondrion outer membrane. The enzyme catalyses 2 Fe(III)-[cytochrome b5] + NADH = 2 Fe(II)-[cytochrome b5] + NAD(+) + H(+). It carries out the reaction 2 Fe(3+)-[Dph3] + NADH = 2 Fe(2+)-[Dph3] + NAD(+) + H(+). It participates in protein modification; peptidyl-diphthamide biosynthesis. Functionally, NADH-dependent reductase for dph3 and cytochrome b5. Required for the first step of diphthamide biosynthesis, a post-translational modification of histidine which occurs in elongation factor 2. Dph1 and dph2 transfer a 3-amino-3-carboxypropyl (ACP) group from S-adenosyl-L-methionine (SAM) to a histidine residue, the reaction is assisted by a reduction system comprising dph3 and a NADH-dependent reductase, predominantly cbr1. By reducing dph3, also involved in the formation of the tRNA wobble base modification mcm5s 2U (5-methoxycarbonylmethyl-2-thiouridine), mediated by the elongator complex. The cytochrome b5/NADH cytochrome b5 reductase electron transfer system supports the catalytic activity of several sterol biosynthetic enzymes. The protein is NADH-cytochrome b5 reductase 1 (cbr1) of Aspergillus clavatus (strain ATCC 1007 / CBS 513.65 / DSM 816 / NCTC 3887 / NRRL 1 / QM 1276 / 107).